A 334-amino-acid polypeptide reads, in one-letter code: Holliday junction branch migration complex subunit RuvB (334 aa).

A large ATPase domain (RuvB-L) region spans residues 1–182; that stretch reads MDKRMVDQEF…FGVHLRLEYY (182 aa). ATP contacts are provided by residues Leu21, Arg22, Gly63, Lys66, Thr67, Thr68, 129–131, Arg172, Tyr182, and Arg219; that span reads EDF. Mg(2+) is bound at residue Thr67. The small ATPAse domain (RuvB-S) stretch occupies residues 183–253; sequence NENDLKEIIT…TTKRALQLLQ (71 aa). A head domain (RuvB-H) region spans residues 256–334; it reads QHGLDYIDHK…HFNTTNEKRE (79 aa). DNA is bound by residues Arg292, Arg311, and Arg316.

This sequence belongs to the RuvB family. As to quaternary structure, homohexamer. Forms an RuvA(8)-RuvB(12)-Holliday junction (HJ) complex. HJ DNA is sandwiched between 2 RuvA tetramers; dsDNA enters through RuvA and exits via RuvB. An RuvB hexamer assembles on each DNA strand where it exits the tetramer. Each RuvB hexamer is contacted by two RuvA subunits (via domain III) on 2 adjacent RuvB subunits; this complex drives branch migration. In the full resolvosome a probable DNA-RuvA(4)-RuvB(12)-RuvC(2) complex forms which resolves the HJ.

It localises to the cytoplasm. It carries out the reaction ATP + H2O = ADP + phosphate + H(+). In terms of biological role, the RuvA-RuvB-RuvC complex processes Holliday junction (HJ) DNA during genetic recombination and DNA repair, while the RuvA-RuvB complex plays an important role in the rescue of blocked DNA replication forks via replication fork reversal (RFR). RuvA specifically binds to HJ cruciform DNA, conferring on it an open structure. The RuvB hexamer acts as an ATP-dependent pump, pulling dsDNA into and through the RuvAB complex. RuvB forms 2 homohexamers on either side of HJ DNA bound by 1 or 2 RuvA tetramers; 4 subunits per hexamer contact DNA at a time. Coordinated motions by a converter formed by DNA-disengaged RuvB subunits stimulates ATP hydrolysis and nucleotide exchange. Immobilization of the converter enables RuvB to convert the ATP-contained energy into a lever motion, pulling 2 nucleotides of DNA out of the RuvA tetramer per ATP hydrolyzed, thus driving DNA branch migration. The RuvB motors rotate together with the DNA substrate, which together with the progressing nucleotide cycle form the mechanistic basis for DNA recombination by continuous HJ branch migration. Branch migration allows RuvC to scan DNA until it finds its consensus sequence, where it cleaves and resolves cruciform DNA. The protein is Holliday junction branch migration complex subunit RuvB of Staphylococcus epidermidis (strain ATCC 35984 / DSM 28319 / BCRC 17069 / CCUG 31568 / BM 3577 / RP62A).